Here is a 195-residue protein sequence, read N- to C-terminus: Probable GTP-binding protein EngB (195 aa).

An EngB-type G domain is found at aspartate 24–isoleucine 195. Residues glycine 32–serine 39, glycine 59–leucine 63, aspartate 77–glycine 80, threonine 144–aspartate 147, and phenylalanine 176–serine 178 contribute to the GTP site. Mg(2+)-binding residues include serine 39 and threonine 61.

The protein belongs to the TRAFAC class TrmE-Era-EngA-EngB-Septin-like GTPase superfamily. EngB GTPase family. It depends on Mg(2+) as a cofactor.

Functionally, necessary for normal cell division and for the maintenance of normal septation. This chain is Probable GTP-binding protein EngB, found in Streptococcus sanguinis (strain SK36).